Consider the following 473-residue polypeptide: Glycine--tRNA ligase (473 aa).

Residues Arg-101 and Glu-172 each contribute to the substrate site. ATP is bound by residues 204 to 206, 214 to 219, 289 to 290, and 333 to 336; these read RNE, FRTREF, EL, and GVER. Position 219-223 (219-223) interacts with substrate; it reads FEQME. 329 to 333 provides a ligand contact to substrate; it reads EPSVG.

The protein belongs to the class-II aminoacyl-tRNA synthetase family. Homodimer.

It is found in the cytoplasm. It carries out the reaction tRNA(Gly) + glycine + ATP = glycyl-tRNA(Gly) + AMP + diphosphate. In terms of biological role, catalyzes the attachment of glycine to tRNA(Gly). This Ureaplasma urealyticum serovar 10 (strain ATCC 33699 / Western) protein is Glycine--tRNA ligase.